A 350-amino-acid polypeptide reads, in one-letter code: Leucine-rich repeat-containing protein 23 (350 aa).

Residues 1–54 show a composition bias toward acidic residues; the sequence is MEDETLEDGPEEEEEDEEEGTAEETNQDVTERDEEEEAEKDEEEDKEEEEEAEK. The tract at residues 1–64 is disordered; sequence MEDETLEDGP…EEPPPHMPLS (64 aa). 8 LRR repeats span residues 107-128, 129-150, 151-171, 172-193, 196-216, 217-238, 239-260, and 262-283; these read HLRYVDLSQNSLQDLSPLGALT, HLLSLRADHNQLVSVSGLGELP, YLQVASFAQNRIKSLQGFGHP, RLETLNLIGNELRDLEGLECSN, SLHTLELRSNQLLSTAGLNLP, SLRELYLGQNNISRLEGLEALV, NLTTLHLRDNQLESLDGFSEHL, and ALQYLNLRSNMVAKLQEVQKLY. In terms of domain architecture, LRRCT spans 296–334; it reads NPCEEEEGYRMETLIALPQLERLDKDFFEEEEKREAAET. The stretch at 314 to 344 forms a coiled coil; that stretch reads QLERLDKDFFEEEEKREAAETKKAREEEMAE. The disordered stretch occupies residues 325 to 350; sequence EEEKREAAETKKAREEEMAEPGEKGN.

It is found in the cytoplasm. The protein localises to the cytoskeleton. Its subcellular location is the flagellum axoneme. This chain is Leucine-rich repeat-containing protein 23 (lrrc23), found in Xenopus tropicalis (Western clawed frog).